A 66-amino-acid polypeptide reads, in one-letter code: Pteroicidin-alpha (66 aa).

Residues 1-22 (MKCIALFLVLSMVVLMAEPGEA) form the signal peptide. The residue at position 43 (Arg43) is an Arginine amide; partial. The propeptide occupies 44-66 (GKNRDMAEQQELERAFDRERAFA).

Belongs to the pleurocidin family. Post-translationally, this peptide exists in N-terminally amidated and non-amidated forms. The amidated form is more active and has a greater alpha-helix content than the non-amidated form. As to expression, expressed in gill, skin, intestine, spleen, anterior kidney, and blood cells.

The protein localises to the secreted. In terms of biological role, the amidated peptide is bactericidal on human pathogens like S.aureus or E.coli, as well as on the fish pathogen A.salmonicida. May also be active against a variety of fungi. It can kill bacteria in less than 30 minutes (S.aureus) and 120 minutes (V.vulnificus). It induces hemolysis of erythrocytes from human and fishes (sea bass and lesser-spotted dogfish). The non-amidated peptide only inhibits growth of human pathogens like S.aureus or E.coli, and the fish pathogen A.salmonicida. Induces hemolysis of erythrocytes from human and fishes (sea bass and lesser-spotted dogfish). This is Pteroicidin-alpha from Pterois volitans (Red lionfish).